A 372-amino-acid chain; its full sequence is Formylglycine-generating enzyme (372 aa).

The first 31 residues, 1-31 (MAAPAREPALRCCIRLARVFLLLVLACEVAG), serve as a signal peptide directing secretion. A disulfide bond links C48 and C50. The segment at 61–80 (SSAAAQRYSREANAPGLTSG) is disordered. E128 contributes to the Ca(2+) binding site. N139 carries an N-linked (GlcNAc...) asparagine glycan. Intrachain disulfides connect C216/C363 and C233/C344. Ca(2+) is bound by residues N257, I258, D271, F273, N291, G294, and E298. Positions 334 and 339 each coordinate Cu(2+). Residues 339–358 (CYRYRCAARSQNTPDSSASN) form an interaction with sulfatases region.

It belongs to the sulfatase-modifying factor family. Monomer, homodimer and heterodimer with SUMF2. It depends on Cu(2+) as a cofactor. N-glycosylated. Contains high-mannose-type oligosaccharides.

It is found in the endoplasmic reticulum lumen. The catalysed reaction is L-cysteinyl-[sulfatase] + 2 a thiol + O2 = an organic disulfide + 3-oxo-L-alanyl-[sulfatase] + hydrogen sulfide + H2O + H(+). It functions in the pathway protein modification; sulfatase oxidation. Oxidase that catalyzes the conversion of cysteine to 3-oxoalanine on target proteins, using molecular oxygen and an unidentified reducing agent. 3-oxoalanine modification, which is also named formylglycine (fGly), occurs in the maturation of arylsulfatases and some alkaline phosphatases that use the hydrated form of 3-oxoalanine as a catalytic nucleophile. Known substrates include GALNS, ARSA, STS and ARSE. This Mus musculus (Mouse) protein is Formylglycine-generating enzyme.